We begin with the raw amino-acid sequence, 121 residues long: Large ribosomal subunit protein bL12 (121 aa).

The protein belongs to the bacterial ribosomal protein bL12 family. Homodimer. Part of the ribosomal stalk of the 50S ribosomal subunit. Forms a multimeric L10(L12)X complex, where L10 forms an elongated spine to which 2 to 4 L12 dimers bind in a sequential fashion. Binds GTP-bound translation factors.

Its function is as follows. Forms part of the ribosomal stalk which helps the ribosome interact with GTP-bound translation factors. Is thus essential for accurate translation. The protein is Large ribosomal subunit protein bL12 of Ureaplasma urealyticum serovar 10 (strain ATCC 33699 / Western).